We begin with the raw amino-acid sequence, 354 residues long: NADH-quinone oxidoreductase subunit H (354 aa).

The next 8 helical transmembrane spans lie at 25 to 45, 91 to 111, 126 to 146, 170 to 190, 205 to 225, 267 to 287, 290 to 310, and 330 to 350; these read LVRILVVAVVILLCVAYLILW, WIYMVAPIMVVVPAFAVWAVI, LLYAMAVSSIGVYGVILAGWA, MGFALVVVLMTAGTLNLSGIV, FLSWNWLPLLPMFVVYFISGI, IVISALAATLFLGGWSAPFGF, FIPGIVWLVAKVFFLLSVFIW, and IFIPVCVVWLVVVGFWIMSPL.

This sequence belongs to the complex I subunit 1 family. NDH-1 is composed of 14 different subunits. Subunits NuoA, H, J, K, L, M, N constitute the membrane sector of the complex.

Its subcellular location is the cell inner membrane. The catalysed reaction is a quinone + NADH + 5 H(+)(in) = a quinol + NAD(+) + 4 H(+)(out). Functionally, NDH-1 shuttles electrons from NADH, via FMN and iron-sulfur (Fe-S) centers, to quinones in the respiratory chain. The immediate electron acceptor for the enzyme in this species is believed to be ubiquinone. Couples the redox reaction to proton translocation (for every two electrons transferred, four hydrogen ions are translocated across the cytoplasmic membrane), and thus conserves the redox energy in a proton gradient. This subunit may bind ubiquinone. This is NADH-quinone oxidoreductase subunit H from Paraburkholderia xenovorans (strain LB400).